Reading from the N-terminus, the 466-residue chain is Ribulose bisphosphate carboxylase large chain (466 aa).

Lys5 carries the N6,N6,N6-trimethyllysine modification. The substrate site is built by Asn114 and Thr164. The active-site Proton acceptor is the Lys166. Lys168 is a binding site for substrate. The Mg(2+) site is built by Lys192, Asp194, and Glu195. N6-carboxylysine is present on Lys192. Catalysis depends on His285, which acts as the Proton acceptor. 3 residues coordinate substrate: Arg286, His318, and Ser370.

This sequence belongs to the RuBisCO large chain family. Type I subfamily. In terms of assembly, heterohexadecamer of 8 large chains and 8 small chains; disulfide-linked. The disulfide link is formed within the large subunit homodimers. Mg(2+) is required as a cofactor. Post-translationally, the disulfide bond which can form in the large chain dimeric partners within the hexadecamer appears to be associated with oxidative stress and protein turnover.

It is found in the plastid. The protein resides in the chloroplast. The enzyme catalyses 2 (2R)-3-phosphoglycerate + 2 H(+) = D-ribulose 1,5-bisphosphate + CO2 + H2O. It catalyses the reaction D-ribulose 1,5-bisphosphate + O2 = 2-phosphoglycolate + (2R)-3-phosphoglycerate + 2 H(+). RuBisCO catalyzes two reactions: the carboxylation of D-ribulose 1,5-bisphosphate, the primary event in carbon dioxide fixation, as well as the oxidative fragmentation of the pentose substrate in the photorespiration process. Both reactions occur simultaneously and in competition at the same active site. The chain is Ribulose bisphosphate carboxylase large chain from Cercidiphyllum japonicum (Katsura tree).